Consider the following 32-residue polypeptide: Zinc metalloproteinase carinactivase-1 catalytic subunit (32 aa).

The 23-residue stretch at 10-32 (FIKLVIVVDHSMVXKXNNDLIAI) folds into the Peptidase M12B domain.

Belongs to the venom metalloproteinase (M12B) family. P-III subfamily. P-IIId sub-subfamily. In terms of assembly, heterodimer of a metalloproteinase subunit and a regulatory subunit comprising two disulfide-linked lectins (14 kDa and 17 kDa chains) (AC Q9PRP7 and AC Q9PRP8). Zn(2+) is required as a cofactor. Expressed by the venom gland.

Its subcellular location is the secreted. Its function is as follows. Calcium-dependent prothrombin (F2) activator. This protein may activate prothrombin via recognition by the regulatory subunit of the calcium ion bound conformation of its gamma-carboxyglutamic acid (GLA) domain, and the subsequent conversion of prothrombin to active thrombin is catalyzed by the catalytic subunit. The sequence is that of Zinc metalloproteinase carinactivase-1 catalytic subunit from Echis carinatus (Saw-scaled viper).